The chain runs to 361 residues: tRNA-specific 2-thiouridylase MnmA (361 aa).

Residues Gly-8–Ser-15 and Met-34 contribute to the ATP site. The segment at Asn-94 to Asp-96 is interaction with target base in tRNA. Residue Cys-99 is the Nucleophile of the active site. Residues Cys-99 and Cys-195 are joined by a disulfide bond. Gly-123 contacts ATP. An interaction with tRNA region spans residues Lys-145–Gln-147. Residue Cys-195 is the Cysteine persulfide intermediate of the active site. Residues Arg-307–Tyr-308 form an interaction with tRNA region.

The protein belongs to the MnmA/TRMU family.

The protein resides in the cytoplasm. It catalyses the reaction S-sulfanyl-L-cysteinyl-[protein] + uridine(34) in tRNA + AH2 + ATP = 2-thiouridine(34) in tRNA + L-cysteinyl-[protein] + A + AMP + diphosphate + H(+). Functionally, catalyzes the 2-thiolation of uridine at the wobble position (U34) of tRNA, leading to the formation of s(2)U34. This chain is tRNA-specific 2-thiouridylase MnmA, found in Legionella pneumophila (strain Paris).